We begin with the raw amino-acid sequence, 373 residues long: Mitochondrial fission regulator 2 (373 aa).

Ser-136 is subject to Phosphoserine. The stretch at 151-179 forms a coiled coil; it reads VSEAAIKKIAALEDELTSLRAQIAAIVAM. Disordered stretches follow at residues 189-331 and 346-373; these read GFIS…WDPV and DDSF…GSRF. A compositionally biased stretch (pro residues) spans 224 to 239; it reads SPPPLPPPPPPLPPPQ. Basic and acidic residues-rich tracts occupy residues 275-287 and 297-310; these read KKTD…ESQR and VLKD…RPVE. A phosphoserine mark is found at Ser-312 and Ser-348. The segment covering 354 to 373 has biased composition (polar residues); sequence RSWQGSPFSSPETSRNGSRF.

Belongs to the MTFR1 family.

It is found in the mitochondrion. May play a role in mitochondrial aerobic respiration essentially in the testis. Can also promote mitochondrial fission. In Rattus norvegicus (Rat), this protein is Mitochondrial fission regulator 2 (Mtfr2).